The sequence spans 373 residues: tRNA-specific 2-thiouridylase MnmA (373 aa).

ATP is bound by residues 7–14 (AMSGGVDS) and Leu33. Residue Cys101 is the Nucleophile of the active site. A disulfide bridge links Cys101 with Cys215. Position 125 (Gly125) interacts with ATP. The tract at residues 165-167 (KDQ) is interaction with tRNA. Cys215 (cysteine persulfide intermediate) is an active-site residue.

It belongs to the MnmA/TRMU family.

The protein localises to the cytoplasm. It carries out the reaction S-sulfanyl-L-cysteinyl-[protein] + uridine(34) in tRNA + AH2 + ATP = 2-thiouridine(34) in tRNA + L-cysteinyl-[protein] + A + AMP + diphosphate + H(+). Functionally, catalyzes the 2-thiolation of uridine at the wobble position (U34) of tRNA, leading to the formation of s(2)U34. In Roseiflexus sp. (strain RS-1), this protein is tRNA-specific 2-thiouridylase MnmA.